The primary structure comprises 33 residues: Cytochrome b6-f complex subunit 8 (33 aa).

The helical transmembrane segment at 2–22 threads the bilayer; it reads LFTFAWASLAAIFTFSIAMVV.

The protein belongs to the PetN family. In terms of assembly, the 4 large subunits of the cytochrome b6-f complex are cytochrome b6, subunit IV (17 kDa polypeptide, PetD), cytochrome f and the Rieske protein, while the 4 small subunits are PetG, PetL, PetM and PetN. The complex functions as a dimer.

Its subcellular location is the cellular thylakoid membrane. Functionally, component of the cytochrome b6-f complex, which mediates electron transfer between photosystem II (PSII) and photosystem I (PSI), cyclic electron flow around PSI, and state transitions. This is Cytochrome b6-f complex subunit 8 from Prochlorococcus marinus (strain MIT 9211).